The sequence spans 236 residues: Thioredoxin-like 2-2, chloroplastic (236 aa).

The N-terminal 82 residues, 1 to 82, are a transit peptide targeting the chloroplast; the sequence is MAGVVRLTTT…LRRPKSQVVR (82 aa). Residues 83–220 form the Thioredoxin domain; it reads VKVDENVAET…QLELGITLQT (138 aa). Active-site nucleophile residues include Cys135 and Cys138. Cys135 and Cys138 are joined by a disulfide.

It belongs to the thioredoxin family.

The protein localises to the plastid. It localises to the chloroplast. Thiol-disulfide oxidoreductase that may participate in various redox reactions. Possesses insulin disulfide bonds reducing activity. In Arabidopsis thaliana (Mouse-ear cress), this protein is Thioredoxin-like 2-2, chloroplastic.